The sequence spans 371 residues: MAPSHVDKVNTRTWSASIVFMVLTFVNVSVHLVLSNFPHLGYPCVYYHVVDFERLNMSAYNVMHLHTPMLFLDSVQLVCYAVFMQLVFLAVTIYYLVCWIKISMRKDKGMSLNQSTRDISYMGDSLTAFLFILSMDTFQLFTLTMSFRLPSMIAFMAAVHFFCLTIFNVSMVTQYRSYKRSLFFFSRLHPKLKGTVQFRTLIVNLVEVALGFNTTVVAMALCYGFGNNFFVRTGHMVLAVFVVYAIISIIYFLLIEAVFFQYVKVQFGYHLGAFFGLCGLIYPIVQYDTFLSNEYRTGISWSFGMLFFIWAMFTTCRAVRYFRGRGSGSVKYQALATASGEEVAALSHHDSLESRRLREEEDDDDEDFEDA.

Topologically, residues 1–13 (MAPSHVDKVNTRT) are intravirion. The chain crosses the membrane as a helical span at residues 14–34 (WSASIVFMVLTFVNVSVHLVL). Residues 35-79 (SNFPHLGYPCVYYHVVDFERLNMSAYNVMHLHTPMLFLDSVQLVC) lie on the Virion surface side of the membrane. Residues 80 to 100 (YAVFMQLVFLAVTIYYLVCWI) form a helical membrane-spanning segment. Over 101–126 (KISMRKDKGMSLNQSTRDISYMGDSL) the chain is Intravirion. Residues 127–147 (TAFLFILSMDTFQLFTLTMSF) traverse the membrane as a helical segment. Topologically, residues 148–151 (RLPS) are virion surface. The chain crosses the membrane as a helical span at residues 152 to 172 (MIAFMAAVHFFCLTIFNVSMV). The Intravirion portion of the chain corresponds to 173 to 200 (TQYRSYKRSLFFFSRLHPKLKGTVQFRT). Residues 201-221 (LIVNLVEVALGFNTTVVAMAL) traverse the membrane as a helical segment. The Virion surface segment spans residues 222-239 (CYGFGNNFFVRTGHMVLA). Residues 240–260 (VFVVYAIISIIYFLLIEAVFF) form a helical membrane-spanning segment. Residues 261-264 (QYVK) are Intravirion-facing. A helical membrane pass occupies residues 265-285 (VQFGYHLGAFFGLCGLIYPIV). The Virion surface segment spans residues 286-298 (QYDTFLSNEYRTG). Residues 299 to 319 (ISWSFGMLFFIWAMFTTCRAV) form a helical membrane-spanning segment. The Intravirion portion of the chain corresponds to 320-371 (RYFRGRGSGSVKYQALATASGEEVAALSHHDSLESRRLREEEDDDDEDFEDA). Residues 346–371 (LSHHDSLESRRLREEEDDDDEDFEDA) form a disordered region. The span at 347 to 359 (SHHDSLESRRLRE) shows a compositional bias: basic and acidic residues. Residues 360–371 (EEDDDDEDFEDA) are compositionally biased toward acidic residues.

The protein belongs to the herpesviridae glycoprotein M family. Interacts (via N-terminus) with gN (via N-terminus). The gM-gN heterodimer forms the gCII complex.

The protein localises to the virion membrane. It localises to the host Golgi apparatus. Its subcellular location is the host trans-Golgi network. It is found in the host endosome membrane. The protein resides in the host nucleus inner membrane. Envelope glycoprotein important for virion assembly and egress. Plays a role in the correct incorporation of gH-gL into virion membrane. Directs the glycoprotein N (gN) to the host trans-Golgi network. This chain is Envelope glycoprotein M, found in Homo sapiens (Human).